The chain runs to 166 residues: Ribosome maturation factor RimM (166 aa).

The 73-residue stretch at 94–166 (EGEYYHADLI…IVIEAAYADQ (73 aa)) folds into the PRC barrel domain.

It belongs to the RimM family. Binds ribosomal protein uS19.

The protein resides in the cytoplasm. Its function is as follows. An accessory protein needed during the final step in the assembly of 30S ribosomal subunit, possibly for assembly of the head region. Essential for efficient processing of 16S rRNA. May be needed both before and after RbfA during the maturation of 16S rRNA. It has affinity for free ribosomal 30S subunits but not for 70S ribosomes. This chain is Ribosome maturation factor RimM, found in Novosphingobium aromaticivorans (strain ATCC 700278 / DSM 12444 / CCUG 56034 / CIP 105152 / NBRC 16084 / F199).